The sequence spans 117 residues: UPF0342 protein Bcer98_0695 (117 aa).

This sequence belongs to the UPF0342 family.

The polypeptide is UPF0342 protein Bcer98_0695 (Bacillus cytotoxicus (strain DSM 22905 / CIP 110041 / 391-98 / NVH 391-98)).